Reading from the N-terminus, the 477-residue chain is 3-isopropylmalate dehydratase large subunit (477 aa).

3 residues coordinate [4Fe-4S] cluster: cysteine 352, cysteine 413, and cysteine 416.

The protein belongs to the aconitase/IPM isomerase family. LeuC type 1 subfamily. As to quaternary structure, heterodimer of LeuC and LeuD. Requires [4Fe-4S] cluster as cofactor.

The catalysed reaction is (2R,3S)-3-isopropylmalate = (2S)-2-isopropylmalate. It participates in amino-acid biosynthesis; L-leucine biosynthesis; L-leucine from 3-methyl-2-oxobutanoate: step 2/4. Functionally, catalyzes the isomerization between 2-isopropylmalate and 3-isopropylmalate, via the formation of 2-isopropylmaleate. In Pseudomonas entomophila (strain L48), this protein is 3-isopropylmalate dehydratase large subunit.